We begin with the raw amino-acid sequence, 500 residues long: Probable E3 ubiquitin-protein ligase ARI16 (500 aa).

The TRIAD supradomain stretch occupies residues 74–288 (NSNSSSADRE…QGNWNCSPVA (215 aa)). Residues 78–130 (SSADRETGDGDYLVSTPFCSHKFSTTCWSEYLSDALKKNKEQRGLISCLSQDC) form an RING-type 1 zinc finger. Positions 96, 98, 125, 130, 169, 174, 194, 196, 201, 204, 209, 214, 241, 244, 261, 263, 268, 271, 278, and 284 each coordinate Zn(2+). An IBR-type zinc finger spans residues 148–214 (EMYENYILES…GLESHRPVSC (67 aa)). The segment at 241 to 271 (CPKCKIPVQQNGDPNYRLINCICSNNFCWIC) adopts an RING-type 2; atypical zinc-finger fold. The RanBP2-type zinc-finger motif lies at 453-483 (EPGSRWFCDRCTFENSWVDKQCKMCFFPLDY).

The protein belongs to the RBR family. Ariadne subfamily. It depends on Zn(2+) as a cofactor. Preferentially expressed in green siliques.

The catalysed reaction is [E2 ubiquitin-conjugating enzyme]-S-ubiquitinyl-L-cysteine + [acceptor protein]-L-lysine = [E2 ubiquitin-conjugating enzyme]-L-cysteine + [acceptor protein]-N(6)-ubiquitinyl-L-lysine.. Its pathway is protein modification; protein ubiquitination. In terms of biological role, might act as an E3 ubiquitin-protein ligase, or as part of E3 complex, which accepts ubiquitin from specific E2 ubiquitin-conjugating enzymes and then transfers it to substrates. This is Probable E3 ubiquitin-protein ligase ARI16 (ARI16) from Arabidopsis thaliana (Mouse-ear cress).